A 503-amino-acid polypeptide reads, in one-letter code: Cytochrome P450 6l1 (503 aa).

Heme is bound at residue C438.

The protein belongs to the cytochrome P450 family. The cofactor is heme. In terms of tissue distribution, detected only in testes and accessory glands of male adults.

It is found in the endoplasmic reticulum membrane. Its subcellular location is the microsome membrane. The chain is Cytochrome P450 6l1 (CYP6L1) from Blattella germanica (German cockroach).